A 327-amino-acid chain; its full sequence is Lipoyl synthase (327 aa).

Positions 72, 77, 83, 98, 102, 105, and 313 each coordinate [4Fe-4S] cluster. Residues 83 to 302 form the Radical SAM core domain; that stretch reads CWSHGTATIM…RKVGLEKGFL (220 aa).

This sequence belongs to the radical SAM superfamily. Lipoyl synthase family. Requires [4Fe-4S] cluster as cofactor.

The protein localises to the cytoplasm. It catalyses the reaction [[Fe-S] cluster scaffold protein carrying a second [4Fe-4S](2+) cluster] + N(6)-octanoyl-L-lysyl-[protein] + 2 oxidized [2Fe-2S]-[ferredoxin] + 2 S-adenosyl-L-methionine + 4 H(+) = [[Fe-S] cluster scaffold protein] + N(6)-[(R)-dihydrolipoyl]-L-lysyl-[protein] + 4 Fe(3+) + 2 hydrogen sulfide + 2 5'-deoxyadenosine + 2 L-methionine + 2 reduced [2Fe-2S]-[ferredoxin]. It participates in protein modification; protein lipoylation via endogenous pathway; protein N(6)-(lipoyl)lysine from octanoyl-[acyl-carrier-protein]: step 2/2. Catalyzes the radical-mediated insertion of two sulfur atoms into the C-6 and C-8 positions of the octanoyl moiety bound to the lipoyl domains of lipoate-dependent enzymes, thereby converting the octanoylated domains into lipoylated derivatives. The chain is Lipoyl synthase from Francisella tularensis subsp. novicida (strain U112).